A 78-amino-acid chain; its full sequence is MSSSKKNNLGYFNNLKTEEVSQSQVFKDNYRPGYYGLDTNAANPADVYNTESNKPSTVDVWGDKRLEGKIIPKSKKKK.

This is an uncharacterized protein from Amsacta (AmEPV).